A 72-amino-acid polypeptide reads, in one-letter code: Disintegrin cotiarin (72 aa).

The 72-residue stretch at 1 to 72 (EAGEECDCGA…SADCPRNRFH (72 aa)) folds into the Disintegrin domain. 6 disulfides stabilise this stretch: Cys6/Cys21, Cys8/Cys16, Cys15/Cys38, Cys29/Cys35, Cys34/Cys59, and Cys47/Cys66. Positions 51 to 53 (RGD) match the Cell attachment site motif. The segment at 51–72 (RGDNPDDRCTGQSADCPRNRFH) is disordered.

It belongs to the venom metalloproteinase (M12B) family. P-II subfamily. P-IIa sub-subfamily. In terms of assembly, monomer. As to expression, expressed by the venom gland.

Its subcellular location is the secreted. In terms of biological role, inhibits fibrinogen interaction with platelets. Acts by binding to alpha-IIb/beta-3 (ITGA2B/ITGB3) on the platelet surface and inhibits aggregation induced by ADP, thrombin, platelet-activating factor and collagen. In Bothrops cotiara (Cotiara), this protein is Disintegrin cotiarin.